The following is a 428-amino-acid chain: Kynureninase (428 aa).

Pyridoxal 5'-phosphate is bound by residues Thr-104, Thr-105, Phe-132 to Asp-135, Asp-213, His-216, and Tyr-238. The residue at position 239 (Lys-239) is an N6-(pyridoxal phosphate)lysine. Residues Trp-267 and Thr-295 each contribute to the pyridoxal 5'-phosphate site.

Belongs to the kynureninase family. As to quaternary structure, homodimer. Pyridoxal 5'-phosphate is required as a cofactor.

It catalyses the reaction L-kynurenine + H2O = anthranilate + L-alanine + H(+). The enzyme catalyses 3-hydroxy-L-kynurenine + H2O = 3-hydroxyanthranilate + L-alanine + H(+). It functions in the pathway amino-acid degradation; L-kynurenine degradation; L-alanine and anthranilate from L-kynurenine: step 1/1. Its pathway is cofactor biosynthesis; NAD(+) biosynthesis; quinolinate from L-kynurenine: step 2/3. Its function is as follows. Catalyzes the cleavage of L-kynurenine (L-Kyn) and L-3-hydroxykynurenine (L-3OHKyn) into anthranilic acid (AA) and 3-hydroxyanthranilic acid (3-OHAA), respectively. The polypeptide is Kynureninase (Bacillus cereus (strain ATCC 14579 / DSM 31 / CCUG 7414 / JCM 2152 / NBRC 15305 / NCIMB 9373 / NCTC 2599 / NRRL B-3711)).